A 158-amino-acid chain; its full sequence is Cyclic pyranopterin monophosphate synthase (158 aa).

Residues 74–76 and 112–113 each bind substrate; these read MCH and ME. Aspartate 127 is an active-site residue.

Belongs to the MoaC family. In terms of assembly, homohexamer; trimer of dimers.

The enzyme catalyses (8S)-3',8-cyclo-7,8-dihydroguanosine 5'-triphosphate = cyclic pyranopterin phosphate + diphosphate. Its pathway is cofactor biosynthesis; molybdopterin biosynthesis. Its function is as follows. Catalyzes the conversion of (8S)-3',8-cyclo-7,8-dihydroguanosine 5'-triphosphate to cyclic pyranopterin monophosphate (cPMP). In Helicobacter pylori (strain J99 / ATCC 700824) (Campylobacter pylori J99), this protein is Cyclic pyranopterin monophosphate synthase.